A 652-amino-acid polypeptide reads, in one-letter code: Leucine-rich repeat-containing protein 4 (652 aa).

An N-terminal signal peptide occupies residues 1 to 40 (MKLLWQVTVHHTWNAVLLPVVYLTAQVWILCAAIAAAASA). Positions 41–74 (GPQNCPSVCSCSNQFSKVVCTRRGLSEVPQGIPS) constitute an LRRNT domain. Residues 41–526 (GPQNCPSVCS…SLDEVMKTTK (486 aa)) are Extracellular-facing. Disulfide bonds link Cys-45-Cys-51 and Cys-49-Cys-60. LRR repeat units lie at residues 75–96 (NTRY…TFRH), 99–120 (HLEV…AFNG), 123–144 (SLNT…AFEY), 147–168 (KLRE…AFNR), 171–193 (SLMR…AFEG), 196–217 (NLKY…TPLV), 218–239 (GLEE…SFHG), 242–263 (SLKK…AFDG), and 266–287 (SLVE…LFTP). N-linked (GlcNAc...) asparagine glycosylation is found at Asn-276, Asn-321, Asn-362, Asn-387, Asn-409, Asn-433, Asn-439, and Asn-449. Positions 299-351 (NPWNCDCDILWLAWWLREYIPTNSTCCGRCHAPMHMRGRYLVEVDQAAFQCSA) constitute an LRRCT domain. Disulfide bonds link Cys-303–Cys-328 and Cys-305–Cys-349. The Ig-like domain occupies 352–441 (PFIMDAPRDL…SNASAYLNVS (90 aa)). Cys-373 and Cys-423 are oxidised to a cystine. The chain crosses the membrane as a helical span at residues 527–547 (IIIGCFVAVTLLAAAMLIVFY). Residues 548–652 (KLRKRHQQRS…TKDKVQETQI (105 aa)) are Cytoplasmic-facing.

As to quaternary structure, interacts (via LRR repeats) with NTNG2. Interacts with DLG4. Forms a complex with DLG4 and with NMDA receptors. In terms of processing, N-glycosylated. As to expression, specifically expressed in brain. In the hippocampus, parietal cortex and piriform cortex expressed in proximal segments of CA1 pyramidal neurons.

Its subcellular location is the membrane. It localises to the postsynaptic cell membrane. Functionally, synaptic adhesion protein. Regulates the formation of exitatory synapses through the recruitment of pre-and-postsynaptic proteins. Organize the lamina/pathway-specific differentiation of dendrites. Plays an important role for auditory synaptic responses. Involved in the suppression of glioma. The polypeptide is Leucine-rich repeat-containing protein 4 (Lrrc4) (Mus musculus (Mouse)).